The following is a 183-amino-acid chain: Ribosome rescue factor SmrB (183 aa).

The Smr domain occupies 98–173 (LDLHGLTQKQ…GDAALLVLIE (76 aa)).

This sequence belongs to the SmrB family. As to quaternary structure, associates with collided ribosomes, but not with correctly translating polysomes.

Its function is as follows. Acts as a ribosome collision sensor. Detects stalled/collided disomes (pairs of ribosomes where the leading ribosome is stalled and a second ribosome has collided with it) and endonucleolytically cleaves mRNA at the 5' boundary of the stalled ribosome. Stalled/collided disomes form a new interface (primarily via the 30S subunits) that binds SmrB. Cleaved mRNA becomes available for tmRNA ligation, leading to ribosomal subunit dissociation and rescue of stalled ribosomes. This Erwinia tasmaniensis (strain DSM 17950 / CFBP 7177 / CIP 109463 / NCPPB 4357 / Et1/99) protein is Ribosome rescue factor SmrB.